Here is a 545-residue protein sequence, read N- to C-terminus: MSDLYDLGTGEKRPFWADAAADEVEARDPDEPVTIKGGVSPSGVPHLGHFNEIMRGYFVAEALRERGYEVRQVFTTDDKDRLRKLPRKLADLDWNVVGLGEVDAGALGRNLGRPYTDIPDPFGCCDSYGAHFTELLRRSAEAIGVPIDLVSNTELYAGGDFDAAVEDALANRDTAREVLSEFQDKVDDEYVPFFPQCAECGLLTETVTDIDLDDGTVGYVCSDVEAGDDVIEGCGHEGRATFRAGKLPWRFEWPAQWRVLGVDFEPFGKDHAEGSWPSGKAVSREVFDTEPPVPMVYEWFTLNGDALSSSAGNIITVDEVLELLEPAVLRYFFTKNPKKQRDFDVSNLDRFVDEFDRFEAGYFGDESVEDDERARADRAYPMVVDELPERQPVRIPYTFAAVLGMTDDRDLRLQMAQRSGHIPDDATDDQIERALERVEKARAWAVRTDNEFNYRLAETLPAVDFDAETAAALDELAAFVETESPDDETLQGEIYETAKRNDVDVGDLFSAGYRLFLDESEGPRLGPLLSAMDETFVVERLRREG.

The short motif at 41-49 (PSGVPHLGH) is the 'HIGH' region element. Residues 306 to 310 (ALSSS) carry the 'KMSKS' region motif.

Belongs to the class-I aminoacyl-tRNA synthetase family.

The protein resides in the cytoplasm. It carries out the reaction tRNA(Lys) + L-lysine + ATP = L-lysyl-tRNA(Lys) + AMP + diphosphate. The protein is Lysine--tRNA ligase of Natronomonas pharaonis (strain ATCC 35678 / DSM 2160 / CIP 103997 / JCM 8858 / NBRC 14720 / NCIMB 2260 / Gabara) (Halobacterium pharaonis).